Consider the following 243-residue polypeptide: LTAKLGYPITDELDIYTRLGGMVWRADSKYNIPGGASFKDHDTGVSPVFAGGLEWAVTRDIATRLEYQWTNNIGDANTVGTRPDNGLLSVGVSYRFGQQEAAAPVVAPAPAPAPEVQTKHFTLKSDVLFNFNKATLKPEGQQALDQMYTQLSNLDPKDGSVVVLGFTDRIGSDAYNQGLSEKRAQSVVDYLISKGIPSDKISARGMGESNPVTGNTCDNVKPRAALIDCLAPDRRVEIEVKGI.

Transmembrane regions (beta stranded) follow at residues 1 to 8 (LTAKLGYP), 13 to 21 (LDIYTRLGG), 47 to 56 (PVFAGGLEWA), 61 to 68 (IATRLEYQ), and 87 to 95 (LLSVGVSYR). Tandem repeats lie at residues 107-108 (AP), 109-110 (AP), 111-112 (AP), and 113-114 (AP). The 4 X 2 AA tandem repeats of A-P stretch occupies residues 107-114 (APAPAPAP). The OmpA-like domain maps to 116 to 243 (VQTKHFTLKS…RRVEIEVKGI (128 aa)). Cysteine 217 and cysteine 229 are disulfide-bonded.

Belongs to the outer membrane OOP (TC 1.B.6) superfamily. OmpA family. In terms of assembly, monomer and homodimer.

It localises to the cell outer membrane. Its function is as follows. With TolR probably plays a role in maintaining the position of the peptidoglycan cell wall in the periplasm. Acts as a porin with low permeability that allows slow penetration of small solutes; an internal gate slows down solute passage. This chain is Outer membrane protein A, found in Atlantibacter hermannii (Escherichia hermannii).